The chain runs to 112 residues: MAM and fibronectin type III domain-containing protein 2 (112 aa).

In terms of tissue distribution, component of the acid-insoluble and acid-soluble organic matrix of the aragonitic skeleton (at protein level).

The protein resides in the secreted. In Acropora millepora (Staghorn coral), this protein is MAM and fibronectin type III domain-containing protein 2.